The following is a 72-amino-acid chain: Conotoxin Vc6.16 (72 aa).

Residues 1–19 (MQKLIILLLVAAVLMSTQA) form the signal peptide. A propeptide spanning residues 20-44 (LFQEKRPKEKIDLLSKRKTDAEKQQ) is cleaved from the precursor. Disulfide bonds link Cys-48–Cys-62, Cys-55–Cys-66, and Cys-61–Cys-71.

This sequence belongs to the conotoxin O2 superfamily. As to expression, expressed by the venom duct.

It is found in the secreted. Its function is as follows. Inhibits voltage-gated ion channels. The polypeptide is Conotoxin Vc6.16 (Conus victoriae (Queen Victoria cone)).